A 499-amino-acid polypeptide reads, in one-letter code: UTP--glucose-1-phosphate uridylyltransferase (499 aa).

An N-acetylserine modification is found at Ser2. Ser17 bears the Phosphoserine mark. Thr19 bears the Phosphothreonine mark. A phosphoserine mark is found at Ser21 and Ser79. UTP is bound by residues Leu109–Gly112, Lys123, Gln186, and Gly215. Substrate is bound at residue Gly111–Gly112. Residue Lys123 coordinates Mg(2+). Residues His216 and Asn244 to Asp246 each bind substrate. Asp246 lines the UTP pocket. Asp246 contributes to the Mg(2+) binding site. Omega-N-methylarginine is present on Arg369. Lys388 is a binding site for UTP. The active site involves Lys388. Residues His448 to His499 are oligomerization.

This sequence belongs to the UDPGP type 1 family. As to quaternary structure, homooctamer.

The enzyme catalyses alpha-D-glucose 1-phosphate + UTP + H(+) = UDP-alpha-D-glucose + diphosphate. In terms of biological role, plays a central role as a glucosyl donor in cellular metabolic pathways. The sequence is that of UTP--glucose-1-phosphate uridylyltransferase from Saccharomyces cerevisiae (strain ATCC 204508 / S288c) (Baker's yeast).